Consider the following 214-residue polypeptide: Small ribosomal subunit protein eS6 (214 aa).

This sequence belongs to the eukaryotic ribosomal protein eS6 family.

This Saccharolobus islandicus (strain Y.G.57.14 / Yellowstone #1) (Sulfolobus islandicus) protein is Small ribosomal subunit protein eS6 (rps6e).